Here is a 313-residue protein sequence, read N- to C-terminus: Ribosomal RNA small subunit methyltransferase H (313 aa).

S-adenosyl-L-methionine is bound by residues glycine 36 to histidine 38, aspartate 56, phenylalanine 80, aspartate 102, and glutamine 109.

Belongs to the methyltransferase superfamily. RsmH family.

Its subcellular location is the cytoplasm. The catalysed reaction is cytidine(1402) in 16S rRNA + S-adenosyl-L-methionine = N(4)-methylcytidine(1402) in 16S rRNA + S-adenosyl-L-homocysteine + H(+). In terms of biological role, specifically methylates the N4 position of cytidine in position 1402 (C1402) of 16S rRNA. In Actinobacillus pleuropneumoniae serotype 3 (strain JL03), this protein is Ribosomal RNA small subunit methyltransferase H.